A 926-amino-acid chain; its full sequence is Storkhead-box protein 2 (926 aa).

Disordered stretches follow at residues 1-32, 338-393, 452-529, 564-586, 633-693, 723-802, and 823-926; these read MKKTRSTTLRRAWPSSDFSDRASDRMRSRSEK, EEEK…DIPG, EMPF…SYID, KEPSSACSLLEPGKTPESMPSYG, VKKL…SLDK, LLKS…VGTM, and TLLT…VTSV. Over residues 18-32 the composition is skewed to basic and acidic residues; sequence FSDRASDRMRSRSEK. The segment covering 353–378 has biased composition (basic residues); the sequence is HSGRSKKSRTHRKSHGKSRSHSKTRV. The span at 379–393 shows a compositional bias: basic and acidic residues; the sequence is SKGDPSDGSHLDIPG. The span at 463-472 shows a compositional bias: basic residues; the sequence is SHSKVHRSHS. The span at 473–495 shows a compositional bias: basic and acidic residues; sequence HTQDRRSRNERSNKAKERSRSMD. A compositionally biased stretch (polar residues) spans 518-529; it reads QDDQTPSQSYID. Composition is skewed to basic and acidic residues over residues 633 to 658 and 684 to 693; these read VKKLSPSERQTPHSSREPVGHKEESP and HSAEPSSLDK. Residues 746–769 are compositionally biased toward polar residues; that stretch reads LGTSAAQAMPPSQRQQEPGGNQEA. Residues 785-799 are compositionally biased toward basic and acidic residues; it reads GANKNAEEEKNRDDV. 2 stretches are compositionally biased toward polar residues: residues 847 to 884 and 914 to 926; these read MDSSSITVDSGFNSPRTRESLASNTSSIVESNRRQNPA and KPSNCLQASVTSV.

The protein is Storkhead-box protein 2 (Stox2) of Mus musculus (Mouse).